The sequence spans 121 residues: Large ribosomal subunit protein bL12 (121 aa).

The protein belongs to the bacterial ribosomal protein bL12 family. As to quaternary structure, homodimer. Part of the ribosomal stalk of the 50S ribosomal subunit. Forms a multimeric L10(L12)X complex, where L10 forms an elongated spine to which 2 to 4 L12 dimers bind in a sequential fashion. Binds GTP-bound translation factors.

Its function is as follows. Forms part of the ribosomal stalk which helps the ribosome interact with GTP-bound translation factors. Is thus essential for accurate translation. The polypeptide is Large ribosomal subunit protein bL12 (Proteus mirabilis (strain HI4320)).